The following is a 396-amino-acid chain: S-adenosylmethionine synthase (396 aa).

Position 16 (His-16) interacts with ATP. Position 18 (Asp-18) interacts with Mg(2+). Glu-44 provides a ligand contact to K(+). L-methionine-binding residues include Glu-57 and Gln-100. The flexible loop stretch occupies residues 100 to 110 (QSVDIAQGVDR). ATP-binding positions include 165-167 (DAK), Asp-240, 246-247 (RK), Ala-263, and Lys-267. Asp-240 serves as a coordination point for L-methionine. Lys-271 serves as a coordination point for L-methionine.

The protein belongs to the AdoMet synthase family. Homotetramer; dimer of dimers. Mg(2+) is required as a cofactor. The cofactor is K(+).

Its subcellular location is the cytoplasm. It catalyses the reaction L-methionine + ATP + H2O = S-adenosyl-L-methionine + phosphate + diphosphate. It participates in amino-acid biosynthesis; S-adenosyl-L-methionine biosynthesis; S-adenosyl-L-methionine from L-methionine: step 1/1. Catalyzes the formation of S-adenosylmethionine (AdoMet) from methionine and ATP. The overall synthetic reaction is composed of two sequential steps, AdoMet formation and the subsequent tripolyphosphate hydrolysis which occurs prior to release of AdoMet from the enzyme. The sequence is that of S-adenosylmethionine synthase from Pseudomonas putida (strain ATCC 700007 / DSM 6899 / JCM 31910 / BCRC 17059 / LMG 24140 / F1).